Reading from the N-terminus, the 305-residue chain is Short-chain dehydrogenase/reductase VdtF (305 aa).

Residues Leu28 and Asn98 each coordinate NADP(+). The Proton donor role is filled by Ser192. Positions 206, 210, and 241 each coordinate NADP(+). Tyr206 functions as the Proton acceptor in the catalytic mechanism. Catalysis depends on Lys210, which acts as the Lowers pKa of active site Tyr.

The protein belongs to the short-chain dehydrogenases/reductases (SDR) family.

The enzyme catalyses methyl 2-[(3S)-9,10-dihydroxy-7-methoxy-1-oxo-1H,3H,4H-naphtho[2,3-c]pyran-3-yl]acetate + AH2 = semiviriditoxin + A. It catalyses the reaction 9,10-dihydroxy-7-methoxy-3-(2-oxopropyl)-1H-benzo[g]isochromen-1-one + AH2 = (3S)-9,10-dihydroxy-7-methoxy-3-(2-oxopropyl)-1H,3H,4H-naphtho[2,3-c]pyran-1-one + A. It participates in secondary metabolite biosynthesis. Short-chain dehydrogenase/reductase; part of the gene cluster that mediates the biosynthesis of viriditoxin, one of the 'classical' secondary metabolites produced by fungi and that has antibacterial activity. The first step is performed by the polyketide synthase VdtA which condenses one acetyl-CoA and 6 malonyl-CoA units to form the heptaketide monomer backbone of viriditoxin. The product of VdtA is then O-methylated on C7 by the O-methyltransferase VdtC. The O-methyl group is important for the stereoselective coupling of the monomers at the final step of viriditoxin biosynthesis. The short-chain dehydrogenase/reductase VdtF then acts as a stereospecific reductase converting the pyrone to dihydropyrone via the reduction of the C3-C4 double bond. The FAD-binding monooxygenase VdtE then converts the ketone group into a methyl-ester group to yield semi-viriditoxin. Finally, the laccase VdtB is involved in dimerization of 2 semi-viriditoxin molecules to yield the final viriditoxin. VdtB is responsible for the regioselective 6,6'-coupling of semi-viriditoxin, which yields (M)-viriditoxin and (P)-viriditoxin at a ratio of 1:2. The non-catalytic carboxylesterase-like protein VdtD affects the stereochemistical outcome of the coupling. The highly reducing polyketide synthase VdtX is not involved in viriditoxin synthesis, but might possibly play a role in the production of additional metabolites not identified yet. This Byssochlamys spectabilis (Paecilomyces variotii) protein is Short-chain dehydrogenase/reductase VdtF.